Reading from the N-terminus, the 119-residue chain is Large ribosomal subunit protein uL18 (119 aa).

The protein belongs to the universal ribosomal protein uL18 family. In terms of assembly, part of the 50S ribosomal subunit; part of the 5S rRNA/L5/L18/L25 subcomplex. Contacts the 5S and 23S rRNAs.

Its function is as follows. This is one of the proteins that bind and probably mediate the attachment of the 5S RNA into the large ribosomal subunit, where it forms part of the central protuberance. This chain is Large ribosomal subunit protein uL18, found in Clostridium botulinum (strain Alaska E43 / Type E3).